Here is a 417-residue protein sequence, read N- to C-terminus: NADH-quinone oxidoreductase subunit D (417 aa).

Belongs to the complex I 49 kDa subunit family. In terms of assembly, NDH-1 is composed of 14 different subunits. Subunits NuoB, C, D, E, F, and G constitute the peripheral sector of the complex.

The protein localises to the cell inner membrane. The catalysed reaction is a quinone + NADH + 5 H(+)(in) = a quinol + NAD(+) + 4 H(+)(out). In terms of biological role, NDH-1 shuttles electrons from NADH, via FMN and iron-sulfur (Fe-S) centers, to quinones in the respiratory chain. The immediate electron acceptor for the enzyme in this species is believed to be ubiquinone. Couples the redox reaction to proton translocation (for every two electrons transferred, four hydrogen ions are translocated across the cytoplasmic membrane), and thus conserves the redox energy in a proton gradient. This is NADH-quinone oxidoreductase subunit D from Legionella pneumophila (strain Corby).